Reading from the N-terminus, the 126-residue chain is uncharacterized protein (126 aa).

2 stretches are compositionally biased toward basic residues: residues 21 to 31 (RKKRKKRKKRR) and 41 to 83 (RILK…RKRR). Residues 21–83 (RKKRKKRKKR…RSPRKRRKRR (63 aa)) form a disordered region.

This is an uncharacterized protein from Saccharomyces cerevisiae (strain ATCC 204508 / S288c) (Baker's yeast).